A 393-amino-acid polypeptide reads, in one-letter code: MAEERKDSEESPGTYSCSKTLRRRGEITPNGKVRYETTQNKAAGITKTNFFRRLVLSIVMISGFCWISVNDKIYSFGLIIFLTISIIREIIGITRKSDGRPFHLRTSIILGLAVPIYSYLVFPSIMMMYFSRVSKCFLRRLSFVCFYSYVAAFMCFVASLRKGRLKPQLGLFALIHLSTYTMAIAAKCAIFNLNKGRFWFVFPALLVISNDISAYVVGKSIGKRPLYRLSPKKTLEGFIGAFIFTTAVGFALGHLHVNSGFLRDADSEQFQKFMKFTVFGANVRVQSIYIHIIPFIFVASFVAPFSGFLASALKRAYKKKDFGEAISGHGGIADRMDCQVLIAIFASTYISSFIYTEERSVGSVFSLICRNFSHDEIMILIEMLNRRVESIRK.

8 helical membrane passes run 49–69 (NFFR…WISV), 73–93 (IYSF…IIGI), 108–128 (IILG…IMMM), 141–161 (LSFV…ASLR), 171–191 (LFAL…CAIF), 198–218 (FWFV…YVVG), 237–257 (GFIG…HLHV), and 290–310 (IHII…GFLA).

This sequence belongs to the CDS family.

It is found in the membrane. It catalyses the reaction a 1,2-diacyl-sn-glycero-3-phosphate + CTP + H(+) = a CDP-1,2-diacyl-sn-glycerol + diphosphate. Its pathway is phospholipid metabolism; CDP-diacylglycerol biosynthesis; CDP-diacylglycerol from sn-glycerol 3-phosphate: step 3/3. This Encephalitozoon cuniculi (strain GB-M1) (Microsporidian parasite) protein is Phosphatidate cytidylyltransferase (CDS1).